A 419-amino-acid chain; its full sequence is Subtilisin-like protease 2 (419 aa).

The first 16 residues, 1–16 (MQLLNFGLLLLPFVAG), serve as a signal peptide directing secretion. Residues 17 to 122 (DLAPQPEPLL…VHPDQHVYLA (106 aa)) constitute a propeptide that is removed on maturation. The Inhibitor I9 domain occupies 36–122 (QYIVTLKEGL…VHPDQHVYLA (87 aa)). One can recognise a Peptidase S8 domain in the interval 131-419 (RWGLGYMSSK…IQERKFKLPK (289 aa)). Active-site charge relay system residues include Asp169 and His201. N-linked (GlcNAc...) asparagine glycans are attached at residues Asn248, Asn261, and Asn348. The active-site Charge relay system is Ser357. A glycan (N-linked (GlcNAc...) asparagine) is linked at Asn388.

It belongs to the peptidase S8 family.

It is found in the secreted. Secreted subtilisin-like serine protease with keratinolytic activity that contributes to pathogenicity. This Arthroderma benhamiae (Trichophyton mentagrophytes) protein is Subtilisin-like protease 2 (SUB2).